The chain runs to 38 residues: Large ribosomal subunit protein bL36 (38 aa).

This sequence belongs to the bacterial ribosomal protein bL36 family.

This Ectopseudomonas mendocina (strain ymp) (Pseudomonas mendocina) protein is Large ribosomal subunit protein bL36.